Here is a 436-residue protein sequence, read N- to C-terminus: GTPase Der (436 aa).

EngA-type G domains lie at 4 to 167 (PTIA…PNEY) and 175 to 351 (IKFS…ESQN). GTP is bound by residues 10–17 (GRPNVGKS), 57–61 (DTGGI), 119–122 (NKVD), 181–188 (GRPNVGKS), 229–233 (DTAGM), and 294–297 (NKWD). Residues 352-436 (TRIPSAVLND…PIHLIARKRK (85 aa)) enclose the KH-like domain.

This sequence belongs to the TRAFAC class TrmE-Era-EngA-EngB-Septin-like GTPase superfamily. EngA (Der) GTPase family. As to quaternary structure, associates with the 50S ribosomal subunit.

GTPase that plays an essential role in the late steps of ribosome biogenesis. The sequence is that of GTPase Der from Streptococcus pneumoniae (strain JJA).